The following is a 46-amino-acid chain: Putative antitoxin VapB3 (46 aa).

It belongs to the UPF0165 family.

Possibly the antitoxin component of a type II toxin-antitoxin (TA) system. Its cognate toxin is VapC3 (Potential). The protein is Putative antitoxin VapB3 (vapB3) of Pyrococcus furiosus (strain ATCC 43587 / DSM 3638 / JCM 8422 / Vc1).